Reading from the N-terminus, the 343-residue chain is Homeobox protein Hox-D13 (343 aa).

Disordered regions lie at residues 1-28 and 78-115; these read MSRA…SSSS and GTSE…PAAA. Positions 85 to 115 are enriched in low complexity; the sequence is SSSSSSSSAVVAARPEAPPAKECPAPTPAAA. Positions 276 to 335 form a DNA-binding region, homeobox; that stretch reads GRKKRVPYTKLQLKELENEYAINKFINKDKRRRISAATNLSERQVTIWFQNRRVKDKKIV.

Belongs to the Abd-B homeobox family.

The protein localises to the nucleus. Sequence-specific transcription factor that binds gene promoters and activates their transcription. Part of a developmental regulatory system that provides cells with specific positional identities on the anterior-posterior axis. The protein is Homeobox protein Hox-D13 (HOXD13) of Homo sapiens (Human).